Reading from the N-terminus, the 220-residue chain is UPF0319 protein YccT (220 aa).

The N-terminal stretch at 1–20 (MKTGALTTFLALCLPVTVFA) is a signal peptide.

The protein belongs to the UPF0319 family.

The protein is UPF0319 protein YccT of Salmonella schwarzengrund (strain CVM19633).